The following is a 465-amino-acid chain: Argininosuccinate lyase (465 aa).

The protein belongs to the lyase 1 family. Argininosuccinate lyase subfamily.

It localises to the cytoplasm. It carries out the reaction 2-(N(omega)-L-arginino)succinate = fumarate + L-arginine. It participates in amino-acid biosynthesis; L-arginine biosynthesis; L-arginine from L-ornithine and carbamoyl phosphate: step 3/3. This chain is Argininosuccinate lyase, found in Clostridium botulinum (strain Eklund 17B / Type B).